We begin with the raw amino-acid sequence, 237 residues long: MQDITQAEAIHWLATQQKITFLTGAGISTASGVPDYRSLKGVYQGIQQPEYLLSRTCLKTEPEKFYQFVKTLYHPDAQPNIIHQKMAQLEQMKRGKIVSQNIDGLHRKAGSQEVVDFHGNLYECYCQTCGATVPWQDYLLSDRHADCHGQIRPAITLYEEGLSEEAIEKAIQAVASADLIVIVGTSFQVHPFCDLIHYKQPTATILAINQTPLFLQQPYYFLEAKAETIFAELTIKE.

Residues 1 to 237 form the Deacetylase sirtuin-type domain; the sequence is MQDITQAEAI…TIFAELTIKE (237 aa). Positions 25, 29, 37, 100, 102, 103, and 118 each coordinate NAD(+). Nicotinamide-binding residues include Ile-102 and Asp-103. The active-site Proton acceptor is His-118. Zn(2+)-binding residues include Cys-126, Cys-129, His-144, and Cys-147. NAD(+)-binding residues include Thr-185, Ser-186, and Asn-209.

This sequence belongs to the sirtuin family. Class U subfamily.

The protein localises to the cytoplasm. It carries out the reaction N(6)-acetyl-L-lysyl-[protein] + NAD(+) + H2O = 2''-O-acetyl-ADP-D-ribose + nicotinamide + L-lysyl-[protein]. Functionally, NAD-dependent protein deacetylase which modulates the activities of several enzymes which are inactive in their acetylated form. The chain is NAD-dependent protein deacetylase from Enterococcus faecalis (strain ATCC 700802 / V583).